Here is a 103-residue protein sequence, read N- to C-terminus: Large ribosomal subunit protein mL63 (103 aa).

The protein belongs to the mitochondrion-specific ribosomal protein mL63 family.

Its subcellular location is the mitochondrion. The sequence is that of Large ribosomal subunit protein mL63 (mrpl57) from Danio rerio (Zebrafish).